Here is a 345-residue protein sequence, read N- to C-terminus: NADH-quinone oxidoreductase subunit 8 (345 aa).

The next 8 membrane-spanning stretches (helical) occupy residues 15–35 (MLLQ…FMVY), 82–102 (FVYF…FVVI), 115–135 (VGIL…IMGG), 161–181 (LGLI…TAIV), 190–210 (LLNW…VSAL), 240–262 (YLLF…SLLF), 278–298 (WWMV…KAIV), and 309–329 (IGWK…AILA).

This sequence belongs to the complex I subunit 1 family. As to quaternary structure, NDH-1 is composed of at least 14 different subunits, Nqo1 to Nqo14. The complex has a L-shaped structure, with the hydrophobic arm (subunits Nqo7, Nqo8, Nqo10 to Nqo14) embedded in the inner membrane and the hydrophilic peripheral arm (subunits Nqo1 to Nqo6, Nqo9) protruding into the bacterial cytoplasm. The hydrophilic domain contains all the redox centers.

The protein localises to the cell inner membrane. It catalyses the reaction a quinone + NADH + 5 H(+)(in) = a quinol + NAD(+) + 4 H(+)(out). NDH-1 shuttles electrons from NADH, via FMN and iron-sulfur (Fe-S) centers, to quinones in the respiratory chain. The immediate electron acceptor for the enzyme in this species is believed to be ubiquinone. Couples the redox reaction to proton translocation (for every two electrons transferred, four hydrogen ions are translocated across the cytoplasmic membrane), and thus conserves the redox energy in a proton gradient. The sequence is that of NADH-quinone oxidoreductase subunit 8 from Paracoccus denitrificans.